Reading from the N-terminus, the 421-residue chain is Peptide chain release factor subunit 1 (421 aa).

This sequence belongs to the eukaryotic release factor 1 family. In terms of assembly, heterodimer of two subunits, one of which binds GTP.

It localises to the cytoplasm. Its function is as follows. Directs the termination of nascent peptide synthesis (translation) in response to the termination codons UAA, UAG and UGA. This chain is Peptide chain release factor subunit 1 (prf1), found in Methanocaldococcus jannaschii (strain ATCC 43067 / DSM 2661 / JAL-1 / JCM 10045 / NBRC 100440) (Methanococcus jannaschii).